A 387-amino-acid chain; its full sequence is S-adenosylmethionine synthase (387 aa).

His-16 contributes to the ATP binding site. Asp-18 serves as a coordination point for Mg(2+). K(+) is bound at residue Glu-44. L-methionine-binding residues include Glu-57 and Gln-100. Positions 100–110 are flexible loop; it reads QSPDIAQGVDR. ATP contacts are provided by residues 167–169, 232–233, Asp-241, 247–248, Ala-264, and Lys-268; these read DAK, RF, and RK. Asp-241 contributes to the L-methionine binding site. Lys-272 serves as a coordination point for L-methionine.

The protein belongs to the AdoMet synthase family. Homotetramer; dimer of dimers. The cofactor is Mg(2+). It depends on K(+) as a cofactor.

It is found in the cytoplasm. It carries out the reaction L-methionine + ATP + H2O = S-adenosyl-L-methionine + phosphate + diphosphate. It functions in the pathway amino-acid biosynthesis; S-adenosyl-L-methionine biosynthesis; S-adenosyl-L-methionine from L-methionine: step 1/1. Functionally, catalyzes the formation of S-adenosylmethionine (AdoMet) from methionine and ATP. The overall synthetic reaction is composed of two sequential steps, AdoMet formation and the subsequent tripolyphosphate hydrolysis which occurs prior to release of AdoMet from the enzyme. This is S-adenosylmethionine synthase from Cupriavidus pinatubonensis (strain JMP 134 / LMG 1197) (Cupriavidus necator (strain JMP 134)).